The following is a 265-amino-acid chain: ETS-related transcription factor Elf-5 (265 aa).

One can recognise a PNT domain in the interval 43 to 129 (YPAFEHQTAC…FILQNIRTQG (87 aa)). The ETS DNA-binding region spans 173 to 254 (SHLWEFVRDL…VDRRLVYKFG (82 aa)).

It belongs to the ETS family. Expressed exclusively in tissues with a high content of epithelial cells. Highly expressed in salivary gland, mammary gland, kidney and prostate. Weakly expressed in placenta and lung. Isoform 1 and isoform 2 are differentially expressed in different tissues. In the kidney, only isoform 1 was expressed, while prostate expressed both isoforms, with levels of isoform 2 being higher. Expression is up-regulated during keratinocyte differentiation. Several epithelial carcinoma cell lines showed lack of expression.

The protein localises to the nucleus. In terms of biological role, transcriptionally activator that may play a role in regulating the later stages of keratinocytes terminal differentiation. Its function is as follows. Isoform 2 binds to DNA sequences containing the consensus nucleotide core sequence GGA[AT]. Transcriptionally activates SPRR2A and the parotid gland-specific PSP promoters. This chain is ETS-related transcription factor Elf-5 (ELF5), found in Homo sapiens (Human).